The chain runs to 991 residues: Translation initiation factor IF-2 (991 aa).

Disordered stretches follow at residues 126–220 and 325–359; these read QADH…DVGE and VKAA…VDEK. Polar residues-rich tracts occupy residues 138–160 and 201–210; these read QTES…TEPA and PAAQTESAVQ. Residues 326–340 are compositionally biased toward low complexity; sequence KAAGDGDTAPAADDA. Residues 343–353 show a composition bias toward basic residues; the sequence is GKKKPGKKKKK. In terms of domain architecture, tr-type G spans 488 to 658; it reads IRPPVVTIMG…LTEAEIRELK (171 aa). The segment at 497–504 is G1; that stretch reads GHVDHGKT. Position 497–504 (497–504) interacts with GTP; it reads GHVDHGKT. Residues 522-526 are G2; sequence GITQH. The segment at 544–547 is G3; it reads DTPG. Residues 544 to 548 and 598 to 601 contribute to the GTP site; these read DTPGH and NKID. The segment at 598–601 is G4; sequence NKID. The interval 634 to 636 is G5; it reads SAK.

This sequence belongs to the TRAFAC class translation factor GTPase superfamily. Classic translation factor GTPase family. IF-2 subfamily.

It is found in the cytoplasm. Its function is as follows. One of the essential components for the initiation of protein synthesis. Protects formylmethionyl-tRNA from spontaneous hydrolysis and promotes its binding to the 30S ribosomal subunits. Also involved in the hydrolysis of GTP during the formation of the 70S ribosomal complex. The chain is Translation initiation factor IF-2 from Chlorobium phaeobacteroides (strain DSM 266 / SMG 266 / 2430).